We begin with the raw amino-acid sequence, 65 residues long: LLFPLATLQLNADQPVERNAENIQDLNPDKRFIFMPVPRRRGPYGSVHRRRGPYRRHGNCFCPSG.

An N-terminal signal peptide occupies residues Leu-1–Ala-12. Residues Asp-13–His-48 constitute a propeptide that is removed on maturation. Serine amide is present on Ser-64.

It belongs to the conotoxin M superfamily. As to quaternary structure, homodimer; disulfide-linked. Expressed by the venom duct.

It is found in the secreted. The protein is Conopeptide Vt3.2 of Conus planorbis (Planorbis cone).